Reading from the N-terminus, the 153-residue chain is Arginine repressor (153 aa).

Belongs to the ArgR family.

Its subcellular location is the cytoplasm. It participates in amino-acid biosynthesis; L-arginine biosynthesis [regulation]. In terms of biological role, regulates arginine biosynthesis genes. This Actinobacillus pleuropneumoniae serotype 3 (strain JL03) protein is Arginine repressor.